Consider the following 64-residue polypeptide: Peptide Ctri9677 (64 aa).

The N-terminal stretch at 1–22 (MKNNTILFTFLIVFLIASQIEA) is a signal peptide. Leucine 36 is modified (leucine amide). Positions 40–64 (SEDREFFDFFTDDNLAALEKALKEY) are excised as a propeptide.

This sequence belongs to the non-disulfide-bridged peptide (NDBP) superfamily. Short antimicrobial peptide (group 4) family. As to expression, expressed by the venom gland.

It is found in the secreted. In terms of biological role, antimicrobial peptide. The sequence is that of Peptide Ctri9677 from Chaerilus tricostatus (Scorpion).